Here is a 426-residue protein sequence, read N- to C-terminus: Endoglucanase Z (426 aa).

A signal peptide spans 1-43 (MPLSYLDKNPVIDSKKHALRKKLFLSCAYFGLSLACLSSNAWA). Residues 44 to 332 (SVEPLSVNGN…VKSIIQSWPY (289 aa)) form a catalytic region. Glu-176 acts as the Proton donor in catalysis. Glu-263 functions as the Nucleophile in the catalytic mechanism. Residues 333 to 366 (KAGSAASATTDPSTDTTTDTTVDEPTTTDTPATA) are linker. The disordered stretch occupies residues 336-367 (SAASATTDPSTDTTTDTTVDEPTTTDTPATAD). Residues 367–426 (DCANANVYPNWVSKDWAGGQPTHNEAGQSIVYKGNLYTANWYTASVPGSDSSWTQVGSCN) form a cellulose-binding region. Cys-368 and Cys-425 form a disulfide bridge.

Belongs to the glycosyl hydrolase 5 (cellulase A) family.

It localises to the secreted. It catalyses the reaction Endohydrolysis of (1-&gt;4)-beta-D-glucosidic linkages in cellulose, lichenin and cereal beta-D-glucans.. Its function is as follows. Represents 97% of the global cellulase activity. This is Endoglucanase Z (celZ) from Dickeya dadantii (strain 3937) (Erwinia chrysanthemi (strain 3937)).